The chain runs to 783 residues: Lon protease (783 aa).

Positions leucine 16–isoleucine 210 constitute a Lon N-terminal domain. Glycine 361–threonine 368 is a binding site for ATP. In terms of domain architecture, Lon proteolytic spans lysine 597–glycine 778. Residues serine 684 and lysine 727 contribute to the active site.

It belongs to the peptidase S16 family. In terms of assembly, homohexamer. Organized in a ring with a central cavity.

The protein localises to the cytoplasm. It carries out the reaction Hydrolysis of proteins in presence of ATP.. Its function is as follows. ATP-dependent serine protease that mediates the selective degradation of mutant and abnormal proteins as well as certain short-lived regulatory proteins. Required for cellular homeostasis and for survival from DNA damage and developmental changes induced by stress. Degrades polypeptides processively to yield small peptide fragments that are 5 to 10 amino acids long. Binds to DNA in a double-stranded, site-specific manner. This Halothermothrix orenii (strain H 168 / OCM 544 / DSM 9562) protein is Lon protease.